The sequence spans 1237 residues: Mediator of RNA polymerase II transcription subunit 5 (1237 aa).

2 disordered regions span residues Asp-1109–Ala-1131 and His-1202–Gly-1226. Low complexity predominate over residues His-1119–Ala-1131.

This sequence belongs to the Mediator complex subunit 5 family. As to quaternary structure, component of the Mediator complex.

Its subcellular location is the nucleus. In terms of biological role, component of the Mediator complex, a coactivator involved in the regulated transcription of nearly all RNA polymerase II-dependent genes. Mediator functions as a bridge to convey information from gene-specific regulatory proteins to the basal RNA polymerase II transcription machinery. Mediator is recruited to promoters by direct interactions with regulatory proteins and serves as a scaffold for the assembly of a functional preinitiation complex with RNA polymerase II and the general transcription factors. The sequence is that of Mediator of RNA polymerase II transcription subunit 5 (NUT1) from Mycosarcoma maydis (Corn smut fungus).